A 255-amino-acid polypeptide reads, in one-letter code: Hydroxyacylglutathione hydrolase (255 aa).

The Zn(2+) site is built by histidine 56, histidine 58, aspartate 60, histidine 61, histidine 114, aspartate 133, and histidine 171.

This sequence belongs to the metallo-beta-lactamase superfamily. Glyoxalase II family. As to quaternary structure, monomer. Zn(2+) serves as cofactor.

It catalyses the reaction an S-(2-hydroxyacyl)glutathione + H2O = a 2-hydroxy carboxylate + glutathione + H(+). It functions in the pathway secondary metabolite metabolism; methylglyoxal degradation; (R)-lactate from methylglyoxal: step 2/2. In terms of biological role, thiolesterase that catalyzes the hydrolysis of S-D-lactoyl-glutathione to form glutathione and D-lactic acid. The chain is Hydroxyacylglutathione hydrolase from Ruegeria pomeroyi (strain ATCC 700808 / DSM 15171 / DSS-3) (Silicibacter pomeroyi).